The following is a 308-amino-acid chain: ADP-L-glycero-D-manno-heptose-6-epimerase (308 aa).

NADP(+) contacts are provided by residues 10–11 (FI), 31–32 (DN), Lys38, Lys53, 75–79 (EGACS), and Asn92. Tyr139 (proton acceptor) is an active-site residue. Lys143 serves as a coordination point for NADP(+). Asn168 provides a ligand contact to substrate. NADP(+)-binding residues include Val169 and Lys177. The active-site Proton acceptor is the Lys177. Residues Ser179, His186, 200 to 203 (FAGS), Arg208, and Tyr271 each bind substrate.

It belongs to the NAD(P)-dependent epimerase/dehydratase family. HldD subfamily. Homopentamer. The cofactor is NADP(+).

It catalyses the reaction ADP-D-glycero-beta-D-manno-heptose = ADP-L-glycero-beta-D-manno-heptose. Its pathway is nucleotide-sugar biosynthesis; ADP-L-glycero-beta-D-manno-heptose biosynthesis; ADP-L-glycero-beta-D-manno-heptose from D-glycero-beta-D-manno-heptose 7-phosphate: step 4/4. In terms of biological role, catalyzes the interconversion between ADP-D-glycero-beta-D-manno-heptose and ADP-L-glycero-beta-D-manno-heptose via an epimerization at carbon 6 of the heptose. This Haemophilus influenzae (strain PittGG) protein is ADP-L-glycero-D-manno-heptose-6-epimerase.